Here is a 331-residue protein sequence, read N- to C-terminus: Photosystem II assembly lipoprotein Ycf48 (331 aa).

Residues Met-1–Gly-23 form the signal peptide. The N-palmitoyl cysteine moiety is linked to residue Cys-24. Residue Cys-24 is the site of S-diacylglycerol cysteine attachment.

It belongs to the Ycf48 family. Part of early PSII assembly complexes which includes D1 (psbA) and PsbI; not found in mature PSII. Binds to the lumenal side of PSII complexes. Interacts with YidC.

The protein localises to the cellular thylakoid membrane. A factor required for optimal assembly of photosystem II (PSII), acting in the early stages of PSII assembly. Also plays a role in replacement of photodamaged D1 (psbA). Assists YidC in synthesis of chlorophyll-binding proteins. In Synechococcus sp. (strain RCC307), this protein is Photosystem II assembly lipoprotein Ycf48.